The chain runs to 280 residues: Fructose-1,6-bisphosphatase class 1 (280 aa).

Mg(2+) is bound by residues Glu64, Asp83, Leu85, and Asp86. Substrate-binding positions include 86-89, Tyr189, and Lys220; that span reads DGSS. Glu226 contacts Mg(2+).

This sequence belongs to the FBPase class 1 family. Homotetramer. The cofactor is Mg(2+).

It localises to the cytoplasm. The enzyme catalyses beta-D-fructose 1,6-bisphosphate + H2O = beta-D-fructose 6-phosphate + phosphate. Its pathway is carbohydrate biosynthesis; gluconeogenesis. The chain is Fructose-1,6-bisphosphatase class 1 from Campylobacter jejuni (strain RM1221).